We begin with the raw amino-acid sequence, 1568 residues long: Plexin-C1 (1568 aa).

Positions Met-1–Gly-34 are cleaved as a signal peptide. The 418-residue stretch at Ala-35 to Val-452 folds into the Sema domain. The Extracellular portion of the chain corresponds to Ala-35–Thr-944. A disulfide bridge links Cys-64 with Cys-87. 3 N-linked (GlcNAc...) asparagine glycosylation sites follow: Asn-86, Asn-141, and Asn-149. 3 disulfide bridges follow: Cys-156–Cys-194, Cys-226–Cys-354, and Cys-283–Cys-329. Residues Asn-241 and Asn-252 are each glycosylated (N-linked (GlcNAc...) asparagine). N-linked (GlcNAc...) asparagine glycans are attached at residues Asn-386 and Asn-407. Cystine bridges form between Cys-455/Cys-472, Cys-461/Cys-506, Cys-464/Cys-481, and Cys-475/Cys-487. Asn-548, Asn-582, Asn-653, Asn-692, Asn-771, Asn-796, Asn-821, Asn-871, and Asn-890 each carry an N-linked (GlcNAc...) asparagine glycan. A helical membrane pass occupies residues Trp-945–Val-965. Over Thr-966 to Met-1568 the chain is Cytoplasmic. At Ser-978 the chain carries Phosphoserine.

It belongs to the plexin family. Monomer. Homodimer. Interacts with SEMA7A. Post-translationally, N-glycosylated. As to expression, detected in heart, brain, lung, spleen and placenta.

The protein resides in the membrane. Its function is as follows. Receptor for SEMA7A, for smallpox semaphorin A39R, vaccinia virus semaphorin A39R and for herpesvirus Sema protein. Binding of semaphorins triggers cellular responses leading to the rearrangement of the cytoskeleton and to secretion of IL6 and IL8. This is Plexin-C1 (PLXNC1) from Homo sapiens (Human).